Consider the following 361-residue polypeptide: 3-dehydroquinate synthase (361 aa).

Residues Gly105–Asp109, Thr129–Thr130, Lys142, Lys151, and Phe169–Thr172 contribute to the NAD(+) site. Positions 184, 247, and 264 each coordinate Zn(2+).

The protein belongs to the sugar phosphate cyclases superfamily. Dehydroquinate synthase family. Requires Co(2+) as cofactor. It depends on Zn(2+) as a cofactor. NAD(+) serves as cofactor.

The protein resides in the cytoplasm. The catalysed reaction is 7-phospho-2-dehydro-3-deoxy-D-arabino-heptonate = 3-dehydroquinate + phosphate. The protein operates within metabolic intermediate biosynthesis; chorismate biosynthesis; chorismate from D-erythrose 4-phosphate and phosphoenolpyruvate: step 2/7. Functionally, catalyzes the conversion of 3-deoxy-D-arabino-heptulosonate 7-phosphate (DAHP) to dehydroquinate (DHQ). This chain is 3-dehydroquinate synthase, found in Endomicrobium trichonymphae.